The primary structure comprises 259 residues: UPF0246 protein RD1_0358 (259 aa).

Belongs to the UPF0246 family.

The chain is UPF0246 protein RD1_0358 from Roseobacter denitrificans (strain ATCC 33942 / OCh 114) (Erythrobacter sp. (strain OCh 114)).